The sequence spans 353 residues: MTIAIGKSSKEPKGLFDSMDDWLRRDRFVFVGWSGLLLFPCAYFALGGWLTGTTFVTSWYTHGLASSYLEGCNFLTAAVSTPANSLAHSLLLLWGPEAQGDFTRWCQLGGLWTFVAFHGAFGLIGFMLRQFEIARSVQLRPYNAIAFTGPIAVFVSVFLIYPLGQSGWFFAPSFGVAGIFRFILFFQGFHNWTLNPFHMMGVAGVLGAALLCAIHGATVENTIFEDGDGANTFRAFNPTQAEETYSFVTANRFWSQIFGVAFSNKRWLHFFMLFVPVTGLWMSAVGVVGLAVNLRAYDFVSQEIRAAEDPEFETFYTKNILLNEGIRAWMAAQDQPHENLVFPEEVLPRGNAL.

Thr-2 bears the N-acetylthreonine mark. Thr-2 carries the phosphothreonine modification. The chain crosses the membrane as a helical span at residues 41-61 (CAYFALGGWLTGTTFVTSWYT). His-118 provides a ligand contact to chlorophyll a. A helical transmembrane segment spans residues 125–141 (GFMLRQFEIARSVQLRP). The pheophytin a site is built by Gln-130 and Asn-143. A helical membrane pass occupies residues 153–166 (VFVSVFLIYPLGQS). His-198 contacts chlorophyll a. The chain crosses the membrane as a helical span at residues 208–228 (AALLCAIHGATVENTIFEDGD). His-215 and Phe-262 together coordinate a plastoquinone. Fe cation is bound at residue His-215. Fe cation is bound at residue His-269. Residues 279–295 (GLWMSAVGVVGLAVNLR) form a helical membrane-spanning segment.

It belongs to the reaction center PufL/M/PsbA/D family. As to quaternary structure, PSII is composed of 1 copy each of membrane proteins PsbA, PsbB, PsbC, PsbD, PsbE, PsbF, PsbH, PsbI, PsbJ, PsbK, PsbL, PsbM, PsbT, PsbX, PsbY, PsbZ, Psb30/Ycf12, at least 3 peripheral proteins of the oxygen-evolving complex and a large number of cofactors. It forms dimeric complexes. It depends on The D1/D2 heterodimer binds P680, chlorophylls that are the primary electron donor of PSII, and subsequent electron acceptors. It shares a non-heme iron and each subunit binds pheophytin, quinone, additional chlorophylls, carotenoids and lipids. There is also a Cl(-1) ion associated with D1 and D2, which is required for oxygen evolution. The PSII complex binds additional chlorophylls, carotenoids and specific lipids. as a cofactor.

It is found in the plastid. The protein resides in the chloroplast thylakoid membrane. The enzyme catalyses 2 a plastoquinone + 4 hnu + 2 H2O = 2 a plastoquinol + O2. Functionally, photosystem II (PSII) is a light-driven water:plastoquinone oxidoreductase that uses light energy to abstract electrons from H(2)O, generating O(2) and a proton gradient subsequently used for ATP formation. It consists of a core antenna complex that captures photons, and an electron transfer chain that converts photonic excitation into a charge separation. The D1/D2 (PsbA/PsbD) reaction center heterodimer binds P680, the primary electron donor of PSII as well as several subsequent electron acceptors. D2 is needed for assembly of a stable PSII complex. This Chaetosphaeridium globosum (Charophycean green alga) protein is Photosystem II D2 protein.